We begin with the raw amino-acid sequence, 85 residues long: Small ribosomal subunit protein bS18c (85 aa).

It belongs to the bacterial ribosomal protein bS18 family. Part of the 30S ribosomal subunit.

The protein resides in the plastid. The protein localises to the chloroplast. This Tupiella akineta (Green alga) protein is Small ribosomal subunit protein bS18c.